The sequence spans 303 residues: ATP phosphoribosyltransferase (303 aa).

This sequence belongs to the ATP phosphoribosyltransferase family. Long subfamily. It depends on Mg(2+) as a cofactor.

The protein resides in the cytoplasm. It catalyses the reaction 1-(5-phospho-beta-D-ribosyl)-ATP + diphosphate = 5-phospho-alpha-D-ribose 1-diphosphate + ATP. It functions in the pathway amino-acid biosynthesis; L-histidine biosynthesis; L-histidine from 5-phospho-alpha-D-ribose 1-diphosphate: step 1/9. Its activity is regulated as follows. Feedback inhibited by histidine. Catalyzes the condensation of ATP and 5-phosphoribose 1-diphosphate to form N'-(5'-phosphoribosyl)-ATP (PR-ATP). Has a crucial role in the pathway because the rate of histidine biosynthesis seems to be controlled primarily by regulation of HisG enzymatic activity. The chain is ATP phosphoribosyltransferase from Haemophilus influenzae (strain 86-028NP).